The chain runs to 182 residues: ATP synthase subunit delta 2 (182 aa).

Belongs to the ATPase delta chain family. As to quaternary structure, F-type ATPases have 2 components, F(1) - the catalytic core - and F(0) - the membrane proton channel. F(1) has five subunits: alpha(3), beta(3), gamma(1), delta(1), epsilon(1). F(0) has three main subunits: a(1), b(2) and c(10-14). The alpha and beta chains form an alternating ring which encloses part of the gamma chain. F(1) is attached to F(0) by a central stalk formed by the gamma and epsilon chains, while a peripheral stalk is formed by the delta and b chains.

Its subcellular location is the cell inner membrane. Functionally, f(1)F(0) ATP synthase produces ATP from ADP in the presence of a proton or sodium gradient. F-type ATPases consist of two structural domains, F(1) containing the extramembraneous catalytic core and F(0) containing the membrane proton channel, linked together by a central stalk and a peripheral stalk. During catalysis, ATP synthesis in the catalytic domain of F(1) is coupled via a rotary mechanism of the central stalk subunits to proton translocation. Its function is as follows. This protein is part of the stalk that links CF(0) to CF(1). It either transmits conformational changes from CF(0) to CF(1) or is implicated in proton conduction. In Photobacterium profundum (strain SS9), this protein is ATP synthase subunit delta 2.